The primary structure comprises 97 residues: DNA-directed RNA polymerase subunit omega (97 aa).

The protein belongs to the RNA polymerase subunit omega family. In terms of assembly, the RNAP catalytic core consists of 2 alpha, 1 beta, 1 beta' and 1 omega subunit. When a sigma factor is associated with the core the holoenzyme is formed, which can initiate transcription.

It carries out the reaction RNA(n) + a ribonucleoside 5'-triphosphate = RNA(n+1) + diphosphate. In terms of biological role, promotes RNA polymerase assembly. Latches the N- and C-terminal regions of the beta' subunit thereby facilitating its interaction with the beta and alpha subunits. This Corynebacterium glutamicum (strain ATCC 13032 / DSM 20300 / JCM 1318 / BCRC 11384 / CCUG 27702 / LMG 3730 / NBRC 12168 / NCIMB 10025 / NRRL B-2784 / 534) protein is DNA-directed RNA polymerase subunit omega.